The chain runs to 389 residues: Succinate--CoA ligase [ADP-forming] subunit beta (389 aa).

The 236-residue stretch at 9-244 (KKLFADYGLP…LTQEDPREAE (236 aa)) folds into the ATP-grasp domain. ATP contacts are provided by residues K46, 53 to 55 (GRG), E99, A102, and E107. Mg(2+) is bound by residues N199 and D213. Substrate is bound by residues N264 and 321 to 323 (GIV).

It belongs to the succinate/malate CoA ligase beta subunit family. As to quaternary structure, heterotetramer of two alpha and two beta subunits. Requires Mg(2+) as cofactor.

The enzyme catalyses succinate + ATP + CoA = succinyl-CoA + ADP + phosphate. It carries out the reaction GTP + succinate + CoA = succinyl-CoA + GDP + phosphate. The protein operates within carbohydrate metabolism; tricarboxylic acid cycle; succinate from succinyl-CoA (ligase route): step 1/1. Its function is as follows. Succinyl-CoA synthetase functions in the citric acid cycle (TCA), coupling the hydrolysis of succinyl-CoA to the synthesis of either ATP or GTP and thus represents the only step of substrate-level phosphorylation in the TCA. The beta subunit provides nucleotide specificity of the enzyme and binds the substrate succinate, while the binding sites for coenzyme A and phosphate are found in the alpha subunit. This chain is Succinate--CoA ligase [ADP-forming] subunit beta, found in Histophilus somni (strain 2336) (Haemophilus somnus).